Here is a 178-residue protein sequence, read N- to C-terminus: Large ribosomal subunit protein eL20w (178 aa).

Belongs to the eukaryotic ribosomal protein eL20 family.

The sequence is that of Large ribosomal subunit protein eL20w (RPL18AD) from Arabidopsis thaliana (Mouse-ear cress).